We begin with the raw amino-acid sequence, 153 residues long: Protein DpnD (153 aa).

The protein is Protein DpnD of Streptococcus pneumoniae serotype 4 (strain ATCC BAA-334 / TIGR4).